Consider the following 423-residue polypeptide: MNILQNLKESDPVISNFINSEKNRQETHLELIASENFASIAVMQAQGSVLTNKYAEGLPQKRYYGGCEFVDEIEELAIQRAKKLFNANWANVQPHSGAQANAAVFLSLLKPGDTIMGMDLSHGGHLTHGSPVNMSGKWFNAVHYGVNKETSELNFDEIREIALEKKPKLIICGYSAYPRTIDFESFRNIADEVGAFLMADIAHIAGLVASKLHPNPIPHCDVVTTTTHKTLRGPRGGLILCKDAEFGKKFDKSVFPGTQGGPLEHIIAAKAVAFREALQPDFVNYSQQVIKNAKVLASTLINRGINIVSGGTDNHIVLLDLRSINMTGKIADLLVSEVNITANKNTVPFDPESPFVTSGLRLGTAALTTRGFNENAFAEVGEIIADRLLNPDNSLIESQCKERVLTLCNRFPLYEGKLEASIK.

(6S)-5,6,7,8-tetrahydrofolate-binding positions include leucine 120 and 124–126 (GHL). The residue at position 229 (lysine 229) is an N6-(pyridoxal phosphate)lysine. 353–355 (SPF) serves as a coordination point for (6S)-5,6,7,8-tetrahydrofolate.

This sequence belongs to the SHMT family. As to quaternary structure, homodimer. Requires pyridoxal 5'-phosphate as cofactor.

The protein resides in the cytoplasm. It carries out the reaction (6R)-5,10-methylene-5,6,7,8-tetrahydrofolate + glycine + H2O = (6S)-5,6,7,8-tetrahydrofolate + L-serine. The protein operates within one-carbon metabolism; tetrahydrofolate interconversion. Its pathway is amino-acid biosynthesis; glycine biosynthesis; glycine from L-serine: step 1/1. In terms of biological role, catalyzes the reversible interconversion of serine and glycine with tetrahydrofolate (THF) serving as the one-carbon carrier. This reaction serves as the major source of one-carbon groups required for the biosynthesis of purines, thymidylate, methionine, and other important biomolecules. Also exhibits THF-independent aldolase activity toward beta-hydroxyamino acids, producing glycine and aldehydes, via a retro-aldol mechanism. This Prochlorococcus marinus (strain AS9601) protein is Serine hydroxymethyltransferase.